The chain runs to 573 residues: Chaperone Ric-8 (573 aa).

Residues 308-324 show a composition bias toward basic and acidic residues; sequence ESHKEREQDNEKEKDTE. 2 disordered regions span residues 308-329 and 473-493; these read ESHK…GAGA and GTDY…QQQQ. S477, S478, S480, and S483 each carry phosphoserine.

This sequence belongs to the synembryn family. In terms of assembly, interacts with GDP-bound G(i)-alpha protein G-i-alpha-65A. Does not interact with G-alpha proteins when they are in complex with subunits beta and gamma. Interacts with Frq2 in a Ca(2+)-independent manner but does not interact with Frq1. In terms of tissue distribution, expression in the embryo is primarily neural.

The protein localises to the cytoplasm. The protein resides in the cell cortex. It localises to the presynapse. Its function is as follows. Chaperone that specifically binds and folds some, but not all, nascent G alpha proteins prior to G protein heterotrimer formation, promoting their stability and activity. Also acts as a guanine nucleotide exchange factor (GEF) for G alpha proteins by stimulating exchange of bound GDP for free GTP. Plays a key role in asymmetric spindle positioning, a step for asymmetric cell division that generates cell diversity during development by activating G(i) alpha protein independently of G-protein coupled receptors. Required during gastrulation and sensory organ precursor (SOP) formation. Plays a role in positively regulating synapse number and neurotransmitter release. This is Chaperone Ric-8 (ric8a) from Drosophila melanogaster (Fruit fly).